Here is a 720-residue protein sequence, read N- to C-terminus: MMTEVHDAGRPRVVIFNGSQLQREAIIPFASRSSCFHHQLCSRGHLLIIFLLLVSPFNDAAVDVDGDDNDNLIIDHVPDAKSSSEALLNFKSSLSTSSPRGHEVLGSWIPSNSPCSGNNGNWLGVLCYEGDVWGLQLENLDLSGVIDIDSLLPLHFLRTLSFMNNSFKGQCLIGISLEPSSHCTCPIIASPVRSRMMLPGYDLSQEALFGKQPIQRQHPHLPGYLLPQVFELSLENNRFTGSIPHFPPNVLKVLNLSNNQLEGPIPPALSLMDPTTFSGNKGLCGKPLESACNSPSQEANNPDSRNSSTISGQSSTDVIRKSPTRLSKVMLIVAVCLVVLCLLIVLILIIRRRSHSSSQNPQPVESNYSNNDRDQNAFTSSAPDDHVTLSGNSTYSNNQHSNSNKAEAPTAAVVGKLSFVRDDRPRFDLQDLLRASAEVLGSGNLGSSYKALLMDGQAVVVKRFKQMNHVAKEDFHEHMRRLGRLTHPNLLPLVAYYYRKEEKLLVYDYASNGSLASHLHGNQSRLDWSSRLKIVKGVAKALAYLHNELPSLALPHGHLKSSNVLLDKYLNPVLMDYTLVPLVNLAQVQHLLVAYKAPEYAQQGRITRKTDVWSLGILILETLTGKFPTNYLALSTGYGTELATWVDTIIRDNESAFDKEMNTTKDSQGQIRKLFDIGVACCQEDLDTRWDLKEVVQSIQSLNDKDHGHSNSDQMHDAGV.

One copy of the LRR 1; degenerate repeat lies at 40–64 (LCSRGHLLIIFLLLVSPFNDAAVDV). The LRR 2; degenerate repeat unit spans residues 123-146 (LGVLCYEGDVWGLQLENLDLSGVI). LRR repeat units follow at residues 154-179 (LHFL…SLEP), 226-248 (LPQV…HFPP), and 249-273 (NVLK…SLMD). The tract at residues 288-319 (LESACNSPSQEANNPDSRNSSTISGQSSTDVI) is disordered. A compositionally biased stretch (polar residues) spans 291 to 317 (ACNSPSQEANNPDSRNSSTISGQSSTD). A helical membrane pass occupies residues 330–350 (MLIVAVCLVVLCLLIVLILII). 2 stretches are compositionally biased toward polar residues: residues 356 to 382 (SSSQ…TSSA) and 389 to 405 (LSGN…NSNK). The disordered stretch occupies residues 356-409 (SSSQNPQPVESNYSNNDRDQNAFTSSAPDDHVTLSGNSTYSNNQHSNSNKAEAP). Residues 434 to 702 (RASAEVLGSG…KEVVQSIQSL (269 aa)) enclose the Protein kinase domain. ATP contacts are provided by residues 440 to 448 (LGSGNLGSS) and Lys-462.

Belongs to the protein kinase superfamily. In terms of assembly, interacts with KIP1. Post-translationally, autophosphorylated. In terms of tissue distribution, expressed in mature pollen grains and pollen tubes, but not in style, petal, leaf, root or sepal. Very low expression in the ovary.

It is found in the microsome membrane. The protein resides in the cytoplasm. It catalyses the reaction L-seryl-[protein] + ATP = O-phospho-L-seryl-[protein] + ADP + H(+). It carries out the reaction L-threonyl-[protein] + ATP = O-phospho-L-threonyl-[protein] + ADP + H(+). The enzyme catalyses L-tyrosyl-[protein] + ATP = O-phospho-L-tyrosyl-[protein] + ADP + H(+). Its function is as follows. Dual-specificity kinase with both serine/threonine and tyrosine kinase activities. Required for postmeiotic development of microspores. Involved in embryo sac development at the late stages of megagametogenesis. Involved in the phosphorylation of KIP1. This chain is Pollen receptor-like kinase 1, found in Petunia integrifolia (Violet-flowered petunia).